The chain runs to 647 residues: Acetyl-coenzyme A synthetase (647 aa).

Residues 190 to 193 (RGGK), threonine 310, and asparagine 334 each bind CoA. Residues 386–388 (GEP), 410–415 (DTWWQT), aspartate 499, and arginine 514 each bind ATP. Serine 522 provides a ligand contact to CoA. Arginine 525 is an ATP binding site. The Mg(2+) site is built by valine 536, histidine 538, and valine 541. Arginine 583 is a CoA binding site. N6-acetyllysine is present on lysine 608.

It belongs to the ATP-dependent AMP-binding enzyme family. Mg(2+) is required as a cofactor. Acetylated. Deacetylation by the SIR2-homolog deacetylase activates the enzyme.

The enzyme catalyses acetate + ATP + CoA = acetyl-CoA + AMP + diphosphate. Functionally, catalyzes the conversion of acetate into acetyl-CoA (AcCoA), an essential intermediate at the junction of anabolic and catabolic pathways. AcsA undergoes a two-step reaction. In the first half reaction, AcsA combines acetate with ATP to form acetyl-adenylate (AcAMP) intermediate. In the second half reaction, it can then transfer the acetyl group from AcAMP to the sulfhydryl group of CoA, forming the product AcCoA. The protein is Acetyl-coenzyme A synthetase of Xanthomonas axonopodis pv. citri (strain 306).